The chain runs to 254 residues: Geranylgeranylglyceryl phosphate synthase (254 aa).

Mg(2+)-binding residues include Asp27 and Ser56. Sn-glycerol 1-phosphate is bound by residues 174–180 (YLEAGSG), 212–213 (GG), and 234–235 (GT).

Belongs to the GGGP/HepGP synthase family. Group II subfamily. Homohexamer. The cofactor is Mg(2+).

It localises to the cytoplasm. The enzyme catalyses sn-glycerol 1-phosphate + (2E,6E,10E)-geranylgeranyl diphosphate = sn-3-O-(geranylgeranyl)glycerol 1-phosphate + diphosphate. The protein operates within membrane lipid metabolism; glycerophospholipid metabolism. In terms of biological role, prenyltransferase that catalyzes the transfer of the geranylgeranyl moiety of geranylgeranyl diphosphate (GGPP) to the C3 hydroxyl of sn-glycerol-1-phosphate (G1P). This reaction is the first ether-bond-formation step in the biosynthesis of archaeal membrane lipids. The polypeptide is Geranylgeranylglyceryl phosphate synthase (Aeropyrum pernix (strain ATCC 700893 / DSM 11879 / JCM 9820 / NBRC 100138 / K1)).